The following is a 522-amino-acid chain: Biotin-dependent long chain acyl-coenzyme A carboxylase beta4 subunit (522 aa).

The CoA carboxyltransferase N-terminal domain maps to 11–261 (TAEKLAELRE…NCFDKPPVVN (251 aa)). In terms of domain architecture, CoA carboxyltransferase C-terminal spans 270-503 (GHDLELDSIV…RLLLRKSMHL (234 aa)).

Belongs to the AccD/PCCB family. The biotin-dependent long-chain acyl-CoA carboxylase (LCC) complex is composed of AccA3, which contains the biotin carboxylase (BC) and biotin carboxyl carrier protein (BCCP) domains, and AccD4, which contains the carboxyl transferase (CT) domain. The complex also contains the beta5 subunit AccD5 and the epsilon subunit AccE5. The four subunits are essential for activity, but AccD5, together with AccE5, probably plays a structural role rather than a catalytic one.

In terms of biological role, component of a biotin-dependent acyl-CoA carboxylase complex. This subunit transfers the CO2 from carboxybiotin to the CoA ester substrate. When associated with the alpha3 subunit AccA3, the beta5 subunit AccD5 and the epsilon subunit AccE5, forms the LCC complex, which is involved in the carboxylation of long chain acyl-CoA. The LCC complex can use C16-C24 substrates, the highest specific activity is obtained with carboxy-C20-CoA. Has low activity with acetyl-CoA and propionyl-CoA. The sequence is that of Biotin-dependent long chain acyl-coenzyme A carboxylase beta4 subunit from Mycobacterium tuberculosis (strain ATCC 25618 / H37Rv).